Consider the following 408-residue polypeptide: MPGIAIIGAQWGDEGKGKVVDVLAREADYVIRYQGGANAGHTVVAEGKVFKLNLLPSGVIHPHAVNVLGDGMVIDPFRFQEEVEGLRKEGFDPKILVSERAHLVLPHHKHVESRHNFVGTTGRGIGPAYSDRARRVGIRAGDLLDEATLRERVRRLLAEKPNSTREAGWDTEEKALADLHRMREILSPYIADTGSLLREAWRKGKRLLFEGAQATLLDLNYGTYPYVTSSHPTVGGILVGTGLSHKAITKVYGVAKAYTTRVGEGPFPTELQGELAHHLREKGGEYGTTTGRPRRVGWLDLVALRYACEVNGFDGLVLTKLDVLSGLEKVKVAVEYLDGARPGEASPEAVRYLELPGWGDLSHVKRREDLPANLLRYLELVEEHTGVPVVLFSTSPRREDTFGAVSWV.

GTP is bound by residues 12-18 (GDEGKGK) and 40-42 (GHT). The active-site Proton acceptor is the D13. Mg(2+) contacts are provided by D13 and G40. IMP is bound by residues 13–16 (DEGK), 38–41 (NAGH), T121, R135, Q213, T228, and R292. Residue H41 is the Proton donor of the active site. Substrate is bound at residue 288 to 294 (TTTGRPR). Residues R294, 320 to 322 (KLD), and 393 to 395 (STS) each bind GTP.

This sequence belongs to the adenylosuccinate synthetase family. As to quaternary structure, homodimer. It depends on Mg(2+) as a cofactor.

The protein resides in the cytoplasm. The catalysed reaction is IMP + L-aspartate + GTP = N(6)-(1,2-dicarboxyethyl)-AMP + GDP + phosphate + 2 H(+). Its pathway is purine metabolism; AMP biosynthesis via de novo pathway; AMP from IMP: step 1/2. Functionally, plays an important role in the de novo pathway of purine nucleotide biosynthesis. Catalyzes the first committed step in the biosynthesis of AMP from IMP. The sequence is that of Adenylosuccinate synthetase from Thermus thermophilus (strain ATCC BAA-163 / DSM 7039 / HB27).